A 1047-amino-acid chain; its full sequence is Ubiquitin carboxyl-terminal hydrolase 48 (1047 aa).

In terms of domain architecture, USP spans 89–416 (VGLTNLGATC…NAYMLVYKQQ (328 aa)). The active-site Nucleophile is the C98. Residue H348 is the Proton acceptor of the active site. DUSP domains are found at residues 457-551 (QSVD…RSSL), 567-697 (NQLN…DHDP), and 717-830 (MMAN…RIHD). The segment at 609 to 647 (LEEDEEETKHNNSKINGEKSSPGTKADGVKGDSEDGDGE) is disordered. Residues 621–631 (SKINGEKSSPG) are compositionally biased toward polar residues. A compositionally biased stretch (basic and acidic residues) spans 635-647 (DGVKGDSEDGDGE). The disordered stretch occupies residues 887-928 (PEFSVSGSDVEDEKEEPKLDGEKDPDFSQTEGGAKRQKLNDT). Residues 901–912 (EEPKLDGEKDPD) are compositionally biased toward basic and acidic residues. In terms of domain architecture, Ubiquitin-like spans 961 to 1012 (VSANQTLKDLKIQIMHAFSVAPFDQNLSIDGRCLKDDSATLGSLGVIPESII).

This sequence belongs to the peptidase C19 family.

The protein resides in the cytoplasm. Its subcellular location is the nucleus. The catalysed reaction is Thiol-dependent hydrolysis of ester, thioester, amide, peptide and isopeptide bonds formed by the C-terminal Gly of ubiquitin (a 76-residue protein attached to proteins as an intracellular targeting signal).. Recognizes and hydrolyzes the peptide bond at the C-terminal Gly of ubiquitin. Involved in the processing of poly-ubiquitin precursors as well as that of ubiquitinated proteins. The protein is Ubiquitin carboxyl-terminal hydrolase 48 (usp48) of Danio rerio (Zebrafish).